The primary structure comprises 277 residues: Undecaprenyl-diphosphatase (277 aa).

5 helical membrane passes run 83–103, 109–129, 188–208, 218–238, and 256–276; these read FALN…VFAS, LFAP…ILWI, ATEF…VYSV, ADIP…FLCV, and YRIV…VVWA.

It belongs to the UppP family.

It is found in the cell inner membrane. The enzyme catalyses di-trans,octa-cis-undecaprenyl diphosphate + H2O = di-trans,octa-cis-undecaprenyl phosphate + phosphate + H(+). Catalyzes the dephosphorylation of undecaprenyl diphosphate (UPP). Confers resistance to bacitracin. This Janthinobacterium sp. (strain Marseille) (Minibacterium massiliensis) protein is Undecaprenyl-diphosphatase.